The sequence spans 376 residues: MSRENQVRQSLFDIERALRESPFWQVVPPEEEAFNSTEPFSLDTMKPEEWLQWVFLPRMHALLDSELALPRSWFYCLILKKRWKGRQKRPRRFCCVSSSSMSYSPPMYRMAQCTMLEIIYQDEHLVAVNKPSGWLVHRSWLDRKEKVVVMQTVRDQIGQHVYTVHRLDRPTSGVLLLALSSEVARALSQQFESHQMQKTYHAVVRGYVLDDGVIDYALTEELDKIADKFTNPDKAPQPAVTHYRSLAQAEMPVAIGRYPTARYSLMELKPQTGRKHQLRRHMSHIHHPIIGDTAHGDLRHNRGMESHFSCGRLMLHASELQLNHPVSGQPLTLQARWDAPWQGVVTQFGWKGILPEFEGVEFPADSGQDSEHFVEQ.

Asp168 is a catalytic residue.

It in the C-terminal section; belongs to the pseudouridine synthase RluA family. To E.coli YqcC in the N-terminal section.

The enzyme catalyses uridine(65) in tRNA = pseudouridine(65) in tRNA. Responsible for synthesis of pseudouridine from uracil-65 in transfer RNAs. This is tRNA pseudouridine synthase C (truC) from Pectobacterium carotovorum subsp. carotovorum (Erwinia carotovora subsp. carotovora).